We begin with the raw amino-acid sequence, 533 residues long: Chromosomal replication initiator protein DnaA (533 aa).

Positions 1–72 (MNDFWQHCSA…DLARDFWNAP (72 aa)) are domain I, interacts with DnaA modulators. The tract at residues 72 to 196 (PIEVQFVLDP…EAADSMYERS (125 aa)) is domain II. The segment at 83 to 120 (AGQRSPAGATPLAPRAPLPSANPAPVAPGPASAPAVDA) is disordered. The segment covering 96–110 (PRAPLPSANPAPVAP) has biased composition (pro residues). The span at 111–120 (GPASAPAVDA) shows a compositional bias: low complexity. The domain III, AAA+ region stretch occupies residues 197–413 (KLNPVLTFDN…GALRKILAYS (217 aa)). Positions 241, 243, 244, and 245 each coordinate ATP. A domain IV, binds dsDNA region spans residues 414-533 (KFHGREITIE…LHVLEQTLKG (120 aa)).

Belongs to the DnaA family. As to quaternary structure, oligomerizes as a right-handed, spiral filament on DNA at oriC.

The protein resides in the cytoplasm. In terms of biological role, plays an essential role in the initiation and regulation of chromosomal replication. ATP-DnaA binds to the origin of replication (oriC) to initiate formation of the DNA replication initiation complex once per cell cycle. Binds the DnaA box (a 9 base pair repeat at the origin) and separates the double-stranded (ds)DNA. Forms a right-handed helical filament on oriC DNA; dsDNA binds to the exterior of the filament while single-stranded (ss)DNA is stabiized in the filament's interior. The ATP-DnaA-oriC complex binds and stabilizes one strand of the AT-rich DNA unwinding element (DUE), permitting loading of DNA polymerase. After initiation quickly degrades to an ADP-DnaA complex that is not apt for DNA replication. Binds acidic phospholipids. This chain is Chromosomal replication initiator protein DnaA, found in Burkholderia pseudomallei (strain 1710b).